Consider the following 77-residue polypeptide: U3-theraphotoxin-Hhn1k (77 aa).

The first 14 residues, 1-14 (TFAGLVLLFVVCYA), serve as a signal peptide directing secretion. A propeptide spanning residues 15 to 42 (SESEEKEFPKEMLSSIFAVDNDFKQEER) is cleaved from the precursor. Cystine bridges form between Cys-44-Cys-57 and Cys-56-Cys-69.

Belongs to the neurotoxin 10 (Hwtx-1) family. 51 (Hntx-8) subfamily. Hntx-8 sub-subfamily. Expressed by the venom gland.

The protein resides in the secreted. Ion channel inhibitor. This Cyriopagopus hainanus (Chinese bird spider) protein is U3-theraphotoxin-Hhn1k.